Here is a 391-residue protein sequence, read N- to C-terminus: Casein kinase II subunit alpha (391 aa).

Residues 36-41 (QDDYQL) are interaction with beta subunit. In terms of domain architecture, Protein kinase spans 39–324 (YQLVRKLGRG…AREAMEHPYF (286 aa)). ATP is bound by residues 45–53 (LGRGKYSEV) and K68. Residue D156 is the Proton acceptor of the active site. Phosphothreonine; by CDK1 occurs at positions 344 and 360. Phosphoserine; by CDK1 is present on residues S362 and S370.

This sequence belongs to the protein kinase superfamily. Ser/Thr protein kinase family. CK2 subfamily. Heterotetramer composed of two catalytic subunits (alpha chain and/or alpha' chain) and two regulatory subunits (beta chains). The tetramer can exist as a combination of 2 alpha/2 beta, 2 alpha'/2 beta or 1 alpha/1 alpha'/2 beta subunits. Also part of a CK2-SPT16-SSRP1 complex composed of SSRP1, SUPT16H, CSNK2A1, CSNK2A2 and CSNK2B, which forms following UV irradiation. Interacts with RNPS1. Interacts with SNAI1. Interacts with PML. Interacts with CCAR2. Interacts with HIRIP3. In terms of processing, phosphorylated at Thr-344, Thr-360, Ser-362 and Ser-370 by CDK1 in prophase and metaphase and dephosphorylated during anaphase. Phosphorylation does not directly affect casein kinase 2 activity, but may contribute to its regulation by forming binding sites for interacting proteins and/or targeting it to different compartments.

The protein resides in the nucleus. It carries out the reaction L-seryl-[protein] + ATP = O-phospho-L-seryl-[protein] + ADP + H(+). It catalyses the reaction L-threonyl-[protein] + ATP = O-phospho-L-threonyl-[protein] + ADP + H(+). Constitutively active protein kinase whose activity is not directly affected by phosphorylation. Seems to be regulated by level of expression and localization. In terms of biological role, catalytic subunit of a constitutively active serine/threonine-protein kinase complex that phosphorylates a large number of substrates containing acidic residues C-terminal to the phosphorylated serine or threonine. Regulates numerous cellular processes, such as cell cycle progression, apoptosis and transcription, as well as viral infection. May act as a regulatory node which integrates and coordinates numerous signals leading to an appropriate cellular response. During mitosis, functions as a component of the p53/TP53-dependent spindle assembly checkpoint (SAC) that maintains cyclin-B-CDK1 activity and G2 arrest in response to spindle damage. Also required for p53/TP53-mediated apoptosis, phosphorylating 'Ser-392' of p53/TP53 following UV irradiation. Phosphorylates a number of DNA repair proteins in response to DNA damage, such as MDC1, MRE11, RAD9A, RAD51 and HTATSF1, promoting their recruitment to DNA damage sites. Can also negatively regulate apoptosis. Phosphorylates the caspases CASP9 and CASP2 and the apoptotic regulator NOL3. Phosphorylation protects CASP9 from cleavage and activation by CASP8, and inhibits the dimerization of CASP2 and activation of CASP8. Phosphorylates YY1, protecting YY1 from cleavage by CASP7 during apoptosis. Regulates transcription by direct phosphorylation of RNA polymerases I, II, III and IV. Also phosphorylates and regulates numerous transcription factors including NF-kappa-B, STAT1, CREB1, IRF1, IRF2, ATF1, ATF4, SRF, MAX, JUN, FOS, MYC and MYB. Phosphorylates Hsp90 and its co-chaperones FKBP4 and CDC37, which is essential for chaperone function. Mediates sequential phosphorylation of FNIP1, promoting its gradual interaction with Hsp90, leading to activate both kinase and non-kinase client proteins of Hsp90. Regulates Wnt signaling by phosphorylating CTNNB1 and the transcription factor LEF1. Acts as an ectokinase that phosphorylates several extracellular proteins. Plays an important role in the circadian clock function by phosphorylating BMAL1 at 'Ser-90' which is pivotal for its interaction with CLOCK and which controls CLOCK nuclear entry. Phosphorylates FMR1, promoting FMR1-dependent formation of a membraneless compartment. May phosphorylate histone H2A on 'Ser-1'. This Bos taurus (Bovine) protein is Casein kinase II subunit alpha (CSNK2A1).